The following is a 484-amino-acid chain: Ribosome biogenesis protein NOP53 (484 aa).

Disordered regions lie at residues 1-51 (MAAG…WRRL) and 304-356 (ESDG…AARK). A2 is modified (N-acetylalanine). At S29 the chain carries Phosphoserine. Over residues 35-49 (RRRRRGPRNKKRGWR) the composition is skewed to basic residues. Residues 148–437 (KEELWEKLAK…SELSGSLRTL (290 aa)) are mediates interaction with CDKN2A/isoform tumor suppressor ARF. S305 is modified (phosphoserine). Basic and acidic residues predominate over residues 336–348 (PEKRMEKKTEQQR). The mediates interaction with human herpesvirus 8 protein ORF16 stretch occupies residues 348–392 (RRREKAARKLRVQQAALRAARLQHQELFRLRGIKAQVARRLAELA). Nucleolar localization signal regions lie at residues 353–401 (AARK…RRIR) and 402–484 (RLAE…EIQL).

The protein belongs to the NOP53 family. Homooligomer. Interacts with PTEN; regulates PTEN phosphorylation and increases its stability. Interacts with RPL11; retains RPL11 into the nucleolus. Interacts with CDKN2A/isoform tumor suppressor ARF; the interaction is direct and promotes ARF nucleoplasmic relocalization and ubiquitin-mediated proteasomal degradation. Interacts with NPM1; the interaction is direct and competitive with MYC. Interacts with NF2 (via FERM domain); the interaction is direct. Interacts with p53/TP53 (via the oligomerization region); the interaction is direct and may prevent the MDM2-mediated proteasomal degradation of p53/TP53. Interacts with RIGI; may regulate RIGI through USP15-mediated 'Lys-63'-linked deubiquitination. Interacts with UBTF. Post-translationally, ubiquitin-mediated proteasomal degradation is regulated by c-JUN. It is associated with relocalization to the nucleoplasm and decreased homooligomerization. In terms of processing, phosphorylated upon DNA damage probably by ATM and DNA-PK; may regulate NOP53 degradation.

Its subcellular location is the nucleus. The protein resides in the nucleolus. It localises to the nucleoplasm. Its function is as follows. Nucleolar protein which is involved in the integration of the 5S RNP into the ribosomal large subunit during ribosome biogenesis. In ribosome biogenesis, may also play a role in rRNA transcription. Also functions as a nucleolar sensor that regulates the activation of p53/TP53 in response to ribosome biogenesis perturbation, DNA damage and other stress conditions. DNA damage or perturbation of ribosome biogenesis disrupt the interaction between NOP53 and RPL11 allowing RPL11 transport to the nucleoplasm where it can inhibit MDM2 and allow p53/TP53 activation. It may also positively regulate the function of p53/TP53 in cell cycle arrest and apoptosis through direct interaction, preventing its MDM2-dependent ubiquitin-mediated proteasomal degradation. Originally identified as a tumor suppressor, it may also play a role in cell proliferation and apoptosis by positively regulating the stability of PTEN, thereby antagonizing the PI3K-AKT/PKB signaling pathway. May also inhibit cell proliferation and increase apoptosis through its interaction with NF2. May negatively regulate NPM1 by regulating its nucleoplasmic localization, oligomerization and ubiquitin-mediated proteasomal degradation. Thereby, may prevent NPM1 interaction with MYC and negatively regulate transcription mediated by the MYC-NPM1 complex. May also regulate cellular aerobic respiration. In the cellular response to viral infection, may play a role in the attenuation of interferon-beta through the inhibition of RIGI. In Mus musculus (Mouse), this protein is Ribosome biogenesis protein NOP53.